The following is a 124-amino-acid chain: Heat-labile enterotoxin B chain (124 aa).

The first 21 residues, 1 to 21 (MNKVKFYVLFTALLSSLCAHG), serve as a signal peptide directing secretion. A disulfide bridge links Cys-30 with Cys-107.

As to quaternary structure, heterohexamer of one A chain and of five B chains.

In terms of biological role, the biological activity of the toxin is produced by the A chain, which activates intracellular adenyl cyclase. This is Heat-labile enterotoxin B chain (eltB) from Escherichia coli.